The chain runs to 726 residues: Catalase-peroxidase (726 aa).

The segment at residues 90–213 (WHAAGTYRIG…LAAVQMGLIY (124 aa)) is a cross-link (tryptophyl-tyrosyl-methioninium (Trp-Tyr) (with M-239)). Catalysis depends on His-91, which acts as the Proton acceptor. The segment at residues 213-239 (YVNPEGPNGKPDPAAAARDIRETFARM) is a cross-link (tryptophyl-tyrosyl-methioninium (Tyr-Met) (with W-90)). His-254 is a binding site for heme b. Residues 338 to 359 (TPKGGAGAGTVPDAHDPSKRHA) are disordered.

Belongs to the peroxidase family. Peroxidase/catalase subfamily. In terms of assembly, homodimer or homotetramer. It depends on heme b as a cofactor. In terms of processing, formation of the three residue Trp-Tyr-Met cross-link is important for the catalase, but not the peroxidase activity of the enzyme.

The catalysed reaction is H2O2 + AH2 = A + 2 H2O. It catalyses the reaction 2 H2O2 = O2 + 2 H2O. Its function is as follows. Bifunctional enzyme with both catalase and broad-spectrum peroxidase activity. The sequence is that of Catalase-peroxidase from Bradyrhizobium sp. (strain ORS 278).